A 321-amino-acid chain; its full sequence is MSLQKLMEPEAGTNRTAVAEFILLGLVQTEEMQPVVFVLLLFAYLVTTGGNLSILAAVLVEPKLHAPMYFFLGNLSVLDVGCITVTVPAMLGRLLSHKSTISYDACLSQLFFFHLLAGMDCFLLTAMAYDRLLAICQPLTYSTRMSQTVQRMLVAASLACAFTNALTHTVAMSTLNFCGPNEVNHFYCDLPQLFQLSCSSTQLNELLLFAVGFIMAGTPLVLIITAYSHVAAAVLRIRSVEGRKKAFSTCGSHLTVVCLFFGRGIFNYMRLGSEEASDKDKGVGVFNTVINPMLNPLIYSLRNPDVQGALWQIFLGRRSLT.

Topologically, residues 1 to 35 are extracellular; that stretch reads MSLQKLMEPEAGTNRTAVAEFILLGLVQTEEMQPV. N14 is a glycosylation site (N-linked (GlcNAc...) asparagine). Residues 36 to 58 form a helical membrane-spanning segment; the sequence is VFVLLLFAYLVTTGGNLSILAAV. Over 59–66 the chain is Cytoplasmic; it reads LVEPKLHA. The helical transmembrane segment at 67 to 88 threads the bilayer; that stretch reads PMYFFLGNLSVLDVGCITVTVP. The Extracellular portion of the chain corresponds to 89–109; it reads AMLGRLLSHKSTISYDACLSQ. Cysteines 106 and 198 form a disulfide. Residues 110–129 traverse the membrane as a helical segment; sequence LFFFHLLAGMDCFLLTAMAY. Residues 130 to 149 are Cytoplasmic-facing; the sequence is DRLLAICQPLTYSTRMSQTV. Residues 150–167 form a helical membrane-spanning segment; it reads QRMLVAASLACAFTNALT. Over 168-205 the chain is Extracellular; it reads HTVAMSTLNFCGPNEVNHFYCDLPQLFQLSCSSTQLNE. The chain crosses the membrane as a helical span at residues 206 to 229; it reads LLLFAVGFIMAGTPLVLIITAYSH. Over 230–246 the chain is Cytoplasmic; the sequence is VAAAVLRIRSVEGRKKA. Residues 247-270 traverse the membrane as a helical segment; the sequence is FSTCGSHLTVVCLFFGRGIFNYMR. The Extracellular portion of the chain corresponds to 271–281; that stretch reads LGSEEASDKDK. The helical transmembrane segment at 282–301 threads the bilayer; it reads GVGVFNTVINPMLNPLIYSL. The Cytoplasmic segment spans residues 302–321; it reads RNPDVQGALWQIFLGRRSLT.

It belongs to the G-protein coupled receptor 1 family.

Its subcellular location is the cell membrane. Its function is as follows. Odorant receptor. The sequence is that of Olfactory receptor 3A2 (OR3A2) from Homo sapiens (Human).